The primary structure comprises 410 residues: UBX domain-containing protein 3 (410 aa).

Disordered stretches follow at residues 46–139 (EEDH…PDPK) and 154–212 (TISP…EKPL). Residues 65 to 85 (GSSSGISGGDQQPPRPLQRQQ) show a composition bias toward low complexity. Polar residues predominate over residues 86–97 (NTQGQGMKSGTA). 3 positions are modified to phosphoserine: Ser-156, Ser-167, and Ser-186. Residues 163 to 174 (SGPSSLASSWAS) show a composition bias toward low complexity. A compositionally biased stretch (polar residues) spans 183–196 (NEASGSTTPVTQSG). Residue Thr-190 is modified to Phosphothreonine. Residues 211–276 (PLRRTLYFWR…VQHRMDEDYV (66 aa)) enclose the SEP domain. The 77-residue stretch at 334–410 (ENKPTTRIQV…KNASLVQKSL (77 aa)) folds into the UBX domain.

Interacts with cdc48.

Its function is as follows. Involved in CDC48-dependent protein degradation through the ubiquitin/proteasome pathway. Involved in delivery of substrates to the 26S proteasome. Also required for membrane fusion and sporulation. In Schizosaccharomyces pombe (strain 972 / ATCC 24843) (Fission yeast), this protein is UBX domain-containing protein 3 (ubx3).